The sequence spans 317 residues: Beta-ketoacyl-[acyl-carrier-protein] synthase III (317 aa).

Active-site residues include C112 and H244. Residues 245 to 249 form an ACP-binding region; the sequence is QANIR. The active site involves N274.

Belongs to the thiolase-like superfamily. FabH family. As to quaternary structure, homodimer.

Its subcellular location is the cytoplasm. It carries out the reaction malonyl-[ACP] + acetyl-CoA + H(+) = 3-oxobutanoyl-[ACP] + CO2 + CoA. The protein operates within lipid metabolism; fatty acid biosynthesis. Its function is as follows. Catalyzes the condensation reaction of fatty acid synthesis by the addition to an acyl acceptor of two carbons from malonyl-ACP. Catalyzes the first condensation reaction which initiates fatty acid synthesis and may therefore play a role in governing the total rate of fatty acid production. Possesses both acetoacetyl-ACP synthase and acetyl transacylase activities. Its substrate specificity determines the biosynthesis of branched-chain and/or straight-chain of fatty acids. This Rickettsia felis (strain ATCC VR-1525 / URRWXCal2) (Rickettsia azadi) protein is Beta-ketoacyl-[acyl-carrier-protein] synthase III.